The chain runs to 512 residues: Putative B3 domain-containing protein REM4 (512 aa).

A DNA-binding region (TF-B3 1) is located at residues 11–103; sequence NKAFFIIDLS…VFHVSPFGRS (93 aa). Residues 111 to 145 are disordered; the sequence is SSSTSDDDDDERTVFDDDEDDDVGDDDDNSISEDD. A compositionally biased stretch (acidic residues) spans 115-145; sequence SDDDDDERTVFDDDEDDDVGDDDDNSISEDD. DNA-binding regions (TF-B3) lie at residues 169 to 265 and 307 to 403; these read YLVA…LCPN and ILTF…CSKV. Positions 408–465 are disordered; the sequence is SSDGHKTADRKPRMTDQAPLAEEQTDNRVEKRAQVTEEGGPSRSTRADPGNLQQKQPC. Basic and acidic residues-rich tracts occupy residues 410-421 and 432-442; these read DGHKTADRKPRM and TDNRVEKRAQV.

It is found in the nucleus. This Arabidopsis thaliana (Mouse-ear cress) protein is Putative B3 domain-containing protein REM4 (REM4).